Here is a 392-residue protein sequence, read N- to C-terminus: Chorismate synthase (392 aa).

NADP(+)-binding residues include R40 and R46. Residues 135–137 (RAS), 256–257 (QA), G300, 315–319 (KPIAT), and R341 contribute to the FMN site.

The protein belongs to the chorismate synthase family. In terms of assembly, homotetramer. FMNH2 serves as cofactor.

The catalysed reaction is 5-O-(1-carboxyvinyl)-3-phosphoshikimate = chorismate + phosphate. It participates in metabolic intermediate biosynthesis; chorismate biosynthesis; chorismate from D-erythrose 4-phosphate and phosphoenolpyruvate: step 7/7. Its function is as follows. Catalyzes the anti-1,4-elimination of the C-3 phosphate and the C-6 proR hydrogen from 5-enolpyruvylshikimate-3-phosphate (EPSP) to yield chorismate, which is the branch point compound that serves as the starting substrate for the three terminal pathways of aromatic amino acid biosynthesis. This reaction introduces a second double bond into the aromatic ring system. This chain is Chorismate synthase, found in Nocardioides sp. (strain ATCC BAA-499 / JS614).